The sequence spans 109 residues: ATPase inhibitor, mitochondrial (109 aa).

Residues 1–25 (MAATALAARTRQAVWSVWAMQGRGF) constitute a mitochondrion transit peptide. The segment at 26–52 (GSESGDNVRSSAGAVRDAGGAFGKREQ) is disordered. The N-terminal inhibitory region stretch occupies residues 26–52 (GSESGDNVRSSAGAVRDAGGAFGKREQ). Residues 69–109 (ALKKHHENEISHHAKEIERLQKEIERHKQSIKKLKQSEDDD) adopt a coiled-coil conformation. Residues 74-106 (HENEISHHAKEIERLQKEIERHKQSIKKLKQSE) are antiparallel alpha-helical coiled coil region. Lys103 carries the N6-succinyllysine modification.

This sequence belongs to the ATPase inhibitor family. As to quaternary structure, homodimer; represents the active form and is present at a pH value below 6.5. Homotetramer; represents the inactive form and is present at a pH value above 7.0.

The protein resides in the mitochondrion. Endogenous F(1)F(o)-ATPase inhibitor limiting ATP depletion when the mitochondrial membrane potential falls below a threshold and the F(1)F(o)-ATP synthase starts hydrolyzing ATP to pump protons out of the mitochondrial matrix. Required to avoid the consumption of cellular ATP when the F(1)F(o)-ATP synthase enzyme acts as an ATP hydrolase. Indirectly acts as a regulator of heme synthesis in erythroid tissues: regulates heme synthesis by modulating the mitochondrial pH and redox potential, allowing FECH to efficiently catalyze the incorporation of iron into protoporphyrin IX to produce heme. The chain is ATPase inhibitor, mitochondrial from Bos taurus (Bovine).